The following is a 163-amino-acid chain: SsrA-binding protein (163 aa).

It belongs to the SmpB family.

Its subcellular location is the cytoplasm. Its function is as follows. Required for rescue of stalled ribosomes mediated by trans-translation. Binds to transfer-messenger RNA (tmRNA), required for stable association of tmRNA with ribosomes. tmRNA and SmpB together mimic tRNA shape, replacing the anticodon stem-loop with SmpB. tmRNA is encoded by the ssrA gene; the 2 termini fold to resemble tRNA(Ala) and it encodes a 'tag peptide', a short internal open reading frame. During trans-translation Ala-aminoacylated tmRNA acts like a tRNA, entering the A-site of stalled ribosomes, displacing the stalled mRNA. The ribosome then switches to translate the ORF on the tmRNA; the nascent peptide is terminated with the 'tag peptide' encoded by the tmRNA and targeted for degradation. The ribosome is freed to recommence translation, which seems to be the essential function of trans-translation. The chain is SsrA-binding protein from Corynebacterium diphtheriae (strain ATCC 700971 / NCTC 13129 / Biotype gravis).